The following is a 912-amino-acid chain: DNA ligase 4 (912 aa).

ATP contacts are provided by glutamate 276, threonine 277, lysine 278, leucine 279, arginine 283, glutamate 336, lysine 350, phenylalanine 372, glutamate 432, lysine 437, lysine 454, and lysine 456. Residue lysine 278 is the N6-AMP-lysine intermediate of the active site. Glutamate 336 is a binding site for Mg(2+). Glutamate 432 is a Mg(2+) binding site. The tract at residues 615–625 (LASKHLYIDEY) is required for catalytic activity. 2 consecutive BRCT domains span residues 659–748 (KVSS…PAFM) and 809–912 (CKLC…QFLI).

Belongs to the ATP-dependent DNA ligase family. As to quaternary structure, interacts with XRCC4; the LIG4-XRCC4 subcomplex has a 1:2 stoichiometry. Component of the core long-range non-homologous end joining (NHEJ) complex (also named DNA-PK complex) composed of PRKDC, LIG4, XRCC4, XRCC6/Ku70, XRCC5/Ku86 and NHEJ1/XLF. Additional component of the NHEJ complex includes PAXX. Following autophosphorylation, PRKDC dissociates from DNA, leading to formation of the short-range NHEJ complex, composed of LIG4, XRCC4, XRCC6/Ku70, XRCC5/Ku86 and NHEJ1/XLF. The cofactor is Mg(2+).

The protein localises to the nucleus. It catalyses the reaction ATP + (deoxyribonucleotide)n-3'-hydroxyl + 5'-phospho-(deoxyribonucleotide)m = (deoxyribonucleotide)n+m + AMP + diphosphate.. Functionally, DNA ligase involved in DNA non-homologous end joining (NHEJ); required for double-strand break (DSB) repair and V(D)J recombination. Catalyzes the NHEJ ligation step of the broken DNA during DSB repair by resealing the DNA breaks after the gap filling is completed. Joins single-strand breaks in a double-stranded polydeoxynucleotide in an ATP-dependent reaction. LIG4 is mechanistically flexible: it can ligate nicks as well as compatible DNA overhangs alone, while in the presence of XRCC4, it can ligate ends with 2-nucleotides (nt) microhomology and 1-nt gaps. Forms a subcomplex with XRCC4; the LIG4-XRCC4 subcomplex is responsible for the NHEJ ligation step and XRCC4 enhances the joining activity of LIG4. This Gallus gallus (Chicken) protein is DNA ligase 4.